Consider the following 214-residue polypeptide: 7-cyano-7-deazaguanine synthase (214 aa).

10 to 20 (FSGGQDSTTCL) is an ATP binding site. Residues Cys184, Cys193, Cys196, and Cys199 each coordinate Zn(2+).

It belongs to the QueC family. Homodimer. Zn(2+) serves as cofactor.

The enzyme catalyses 7-carboxy-7-deazaguanine + NH4(+) + ATP = 7-cyano-7-deazaguanine + ADP + phosphate + H2O + H(+). Its pathway is purine metabolism; 7-cyano-7-deazaguanine biosynthesis. In terms of biological role, catalyzes the ATP-dependent conversion of 7-carboxy-7-deazaguanine (CDG) to 7-cyano-7-deazaguanine (preQ(0)). In Exiguobacterium sp. (strain ATCC BAA-1283 / AT1b), this protein is 7-cyano-7-deazaguanine synthase.